The chain runs to 205 residues: Endothelial cell-specific chemotaxis regulator (205 aa).

The signal sequence occupies residues 1–24; that stretch reads MGTAGAMQLCWVILGFLLFRGHNS. Residues 25 to 124 lie on the Extracellular side of the membrane; it reads QPTMTQTSSS…TSETVLTVAA (100 aa). 2 stretches are compositionally biased toward polar residues: residues 49 to 71 and 86 to 101; these read SSNPGYIPSSEANRPSHLSSTGT and SRDTFQTVPPNSTTMS. Residues 49–101 are disordered; that stretch reads SSNPGYIPSSEANRPSHLSSTGTPGAGVPSSGRDGGTSRDTFQTVPPNSTTMS. Residues 125–145 traverse the membrane as a helical segment; sequence FGVISFIVILVVVVIILVGVV. Residues 146–205 lie on the Cytoplasmic side of the membrane; that stretch reads SLRFKCRKSKESEDPQKPGSSGLSESCSTANGEKDSITLISMKNINMNNGKQSLSAEKVL. Positions 153–175 are disordered; sequence KSKESEDPQKPGSSGLSESCSTA. The span at 163–175 shows a compositional bias: polar residues; sequence PGSSGLSESCSTA. Ser198 carries the phosphoserine modification.

Belongs to the ECSCR family. Interacts with FLNA. Interacts with the 20S proteasome subunit PSMA7. In terms of processing, may be heavily O-glycosylated. Highest expression in endothelial cells. Also detected in vascular smooth muscle, macrophages, lymphocytes, and mast cells.

The protein localises to the cell membrane. It localises to the cytoplasm. In terms of biological role, regulates endothelial chemotaxis and tube formation. Has a role in angiogenesis and apoptosis via modulation of the actin cytoskeleton and facilitation of proteasomal degradation of the apoptosis inhibitors BIRC3/IAP1 and BIRC2/IAP2. This is Endothelial cell-specific chemotaxis regulator (ECSCR) from Homo sapiens (Human).